The following is a 123-amino-acid chain: Late histone H2B.L3 (123 aa).

The span at 1 to 10 (MPAKAQAAGK) shows a compositional bias: low complexity. The tract at residues 1–32 (MPAKAQAAGKKGSKKAKAPKPSGDKKRRRKRK) is disordered. A glycan (O-linked (GlcNAc) serine) is linked at S110. A Glycyl lysine isopeptide (Lys-Gly) (interchain with G-Cter in ubiquitin) cross-link involves residue K118.

This sequence belongs to the histone H2B family. The nucleosome is a histone octamer containing two molecules each of H2A, H2B, H3 and H4 assembled in one H3-H4 heterotetramer and two H2A-H2B heterodimers. The octamer wraps approximately 147 bp of DNA. Monoubiquitination of Lys-118 gives a specific tag for epigenetic transcriptional activation and is also prerequisite for histone H3 'Lys-4' and 'Lys-79' methylation. In terms of processing, glcNAcylation at Ser-110 promotes monoubiquitination of Lys-118. It fluctuates in response to extracellular glucose, and associates with transcribed genes.

It localises to the nucleus. The protein resides in the chromosome. Core component of nucleosome. Nucleosomes wrap and compact DNA into chromatin, limiting DNA accessibility to the cellular machineries which require DNA as a template. Histones thereby play a central role in transcription regulation, DNA repair, DNA replication and chromosomal stability. DNA accessibility is regulated via a complex set of post-translational modifications of histones, also called histone code, and nucleosome remodeling. The protein is Late histone H2B.L3 of Strongylocentrotus purpuratus (Purple sea urchin).